Consider the following 1330-residue polypeptide: pre-mRNA 3' end processing protein WDR33 (1330 aa).

Ala2 is subject to N-acetylalanine. Ser7 carries the phosphoserine modification. N6-acetyllysine is present on Lys46. WD repeat units follow at residues 117–156 (KVKCPVFVVRWTPEGRRLVTGASSGEFTLWNGLTFNFETI), 159–198 (AHDSPVRAMTWSHNDMWMLTADHGGYVKYWQSNMNNVKMF), 200–239 (AHKEAIREASFSPTDNKFATCSDDGTVRIWDFLRCHEERI), 242–283 (GHGA…SLAT), 286–325 (AHKNTVMEVKLNLNGNWLLTASRDHLCKLFDIRNLKEELQ), 329–369 (GHKK…EVGG), and 373–412 (AHEGMIWSLAWHPLGHILCSGSNDHTSKFWTRNRPGDKMR). Residues Lys526, Lys530, and Lys560 each participate in a glycyl lysine isopeptide (Lys-Gly) (interchain with G-Cter in SUMO2) cross-link. Positions 566–1330 (QKQADQIQPP…GTSRGSGRGR (765 aa)) are disordered. Polar residues predominate over residues 588–607 (FSGQGPISQIPQGFQQPHPS). The region spanning 617–769 (GPPGPQGQFR…GPASQGIQGP (153 aa)) is the Collagen-like domain. The segment covering 622–642 (QGQFRAPGPQGQMGPQGPPMH) has biased composition (low complexity). The segment covering 682–694 (PHGPLGPQGPPGP) has biased composition (pro residues). 2 stretches are compositionally biased toward low complexity: residues 695–706 (QGSSGPQGHMGP) and 725–750 (QGHMGPQGPPGTQGMQGPPGPRGMQG). The residue at position 776 (Arg776) is an Omega-N-methylarginine. Low complexity predominate over residues 848 to 863 (GPSGSQGQQGPPQGSL). Arg909 is subject to Asymmetric dimethylarginine. The segment covering 926 to 935 (PGLGQQGAQG) has biased composition (low complexity). Composition is skewed to basic and acidic residues over residues 965 to 983 (SERRHEQSGGPEHGPDRGP) and 992 to 1027 (GPPDRRGSHPDFPDDFRPDDFHPDKRFGHRLREFEG). Arg981 is modified (omega-N-methylarginine). Arg1028 is modified (omega-N-methylarginine). Basic and acidic residues-rich tracts occupy residues 1049-1061 (PDHREFNEGDGRG) and 1071-1115 (EGRR…RGRD). The span at 1123-1133 (FGPEEGFDASD) shows a compositional bias: acidic residues. Composition is skewed to basic and acidic residues over residues 1134-1143 (EAARGRDLRG), 1163-1211 (EFPR…RERS), and 1236-1253 (SEHREMEAQGGPSEDRGS). At Ser1204 the chain carries Phosphoserine. Residue Arg1256 is modified to Omega-N-methylarginine. Over residues 1275-1287 (DGDHHDGYHRDEP) the composition is skewed to basic and acidic residues. The segment covering 1293–1323 (GSSSSSRGARSGSNWGRGSNMNSGPPRRGTS) has biased composition (low complexity). Arg1309 is modified (asymmetric dimethylarginine; alternate). Arg1309 is subject to Omega-N-methylarginine; alternate.

It belongs to the WD repeat WDR33 family. Component of the cleavage and polyadenylation specificity factor (CPSF) module of the pre-mRNA 3'-end processing complex. Interacts with CPSF3/CPSF73. In terms of tissue distribution, most highly expressed in testis.

It is found in the nucleus. Essential for both cleavage and polyadenylation of pre-mRNA 3' ends. In Mus musculus (Mouse), this protein is pre-mRNA 3' end processing protein WDR33 (Wdr33).